The chain runs to 156 residues: Acyl carrier protein, mitochondrial (156 aa).

The N-terminal 68 residues, 1–68 (MAVRVLCACV…GRVTQLCRQY (68 aa)), are a transit peptide targeting the mitochondrion. Positions 77–152 (EGIKDRVLYV…EIVDYIADKK (76 aa)) constitute a Carrier domain. Lysine 88 carries the N6-acetyllysine modification. O-(pantetheine 4'-phosphoryl)serine is present on serine 112.

Mammalian complex I is composed of 45 different subunits. Interacts with ETFRF1. Identified in a complex composed of MALSU1, MIEF1 upstream open reading frame protein and NDUFAB1; within the trimeric complex MIEF1 upstream open reading frame protein functions as a bridging scaffold that interacts with MALSU1 on one side, and with NDUFAB1 on the other side. The complex interacts with the mitochondrial large ribosomal subunit. Interacts with alpha-1-microglobulin chain; this interaction is required for the maintenance of mitochondrial redox homeostasis. Component of the mitochondrial core iron-sulfur cluster (ISC) complex composed of NFS1, LYRM4, NDUFAB1, ISCU, FXN, and FDX2; this complex is a heterohexamer containing two copies of each monomer. Component of the cyteine desulfurase complex composed of NFS1, LYRM4 and NDUFAB1; this complex contributes to the stability and cysteine desulfurase activity of NFS1. Post-translationally, phosphopantetheinylation at Ser-112 is essential for interactions with LYR motif-containing proteins.

The protein localises to the mitochondrion. Functionally, carrier of the growing fatty acid chain in fatty acid biosynthesis. Accessory and non-catalytic subunit of the mitochondrial membrane respiratory chain NADH dehydrogenase (Complex I), which functions in the transfer of electrons from NADH to the respiratory chain. Accessory protein, of the core iron-sulfur cluster (ISC) assembly complex, that regulates, in association with LYRM4, the stability and the cysteine desulfurase activity of NFS1 and participates in the [2Fe-2S] clusters assembly on the scaffolding protein ISCU. The core iron-sulfur cluster (ISC) assembly complex is involved in the de novo synthesis of a [2Fe-2S] cluster, the first step of the mitochondrial iron-sulfur protein biogenesis. This process is initiated by the cysteine desulfurase complex (NFS1:LYRM4:NDUFAB1) that produces persulfide which is delivered on the scaffold protein ISCU in a FXN-dependent manner. Then this complex is stabilized by FDX2 which provides reducing equivalents to accomplish the [2Fe-2S] cluster assembly. Finally, the [2Fe-2S] cluster is transferred from ISCU to chaperone proteins, including HSCB, HSPA9 and GLRX5. This chain is Acyl carrier protein, mitochondrial, found in Bos taurus (Bovine).